We begin with the raw amino-acid sequence, 185 residues long: Large ribosomal subunit protein uL5 (185 aa).

This sequence belongs to the universal ribosomal protein uL5 family. As to quaternary structure, part of the 50S ribosomal subunit; part of the 5S rRNA/L5/L18/L25 subcomplex. Contacts the 5S rRNA and the P site tRNA. Forms a bridge to the 30S subunit in the 70S ribosome.

Functionally, this is one of the proteins that bind and probably mediate the attachment of the 5S RNA into the large ribosomal subunit, where it forms part of the central protuberance. In the 70S ribosome it contacts protein S13 of the 30S subunit (bridge B1b), connecting the 2 subunits; this bridge is implicated in subunit movement. Contacts the P site tRNA; the 5S rRNA and some of its associated proteins might help stabilize positioning of ribosome-bound tRNAs. In Rhodopseudomonas palustris (strain HaA2), this protein is Large ribosomal subunit protein uL5.